The primary structure comprises 232 residues: UPF0758 protein EF_2926 (232 aa).

One can recognise an MPN domain in the interval 107–229 (KVTSSQQVAQ…YISLREENFF (123 aa)). Zn(2+)-binding residues include H178, H180, and D191. Residues 178 to 191 (HNHPSGNPTPSPQD) carry the JAMM motif motif.

It belongs to the UPF0758 family.

The chain is UPF0758 protein EF_2926 from Enterococcus faecalis (strain ATCC 700802 / V583).